The chain runs to 382 residues: uncharacterized protein (382 aa).

A run of 12 helical transmembrane segments spans residues 14-34, 45-65, 79-99, 102-122, 131-151, 157-177, 204-224, 235-255, 270-290, 291-311, 325-345, and 348-368; these read GLLLLTLAIAVLNTLVPLWLA, VVSSSYFTGNLVGTLLTGYVI, FIFAAGCAGLGLMIGFWSWLA, FVAGVGCAMIWVVVESALMCS, LLAAYMMVYYVGTFLGQLLVS, LMSVLPWVTGLTLAGILPLLF, LGVNGCIISGIVLGSLYGLMP, ASIGFWMAVLVSAGILGQWPI, VQVFVVILGSIAMLSQAAMAP, ALFILGAAGFTLYPVAMAWAC, ALLLSYTVGSLLGPSFTAMLM, and FSDNLLFIMIASVSFIYLLML.

Belongs to the major facilitator superfamily. YcaD (TC 2.A.1.26) family.

Its subcellular location is the cell inner membrane. This is an uncharacterized protein from Shigella sonnei (strain Ss046).